A 282-amino-acid polypeptide reads, in one-letter code: MGKFTYDINRYEPKQMVALPLCLLILSVIFLAFNTVSTGMPVEPGIDFAGGVAVTLSTSDSVDVIEDYFADYPLKISESDVAAGYLVFNYLEGDSFKDLTEHITARYPDATIYQMGETFGKTLQSQAIWALLFAFVLMAIVVFVAFRIFIPSVAVVLSAFSDIVITAAFMDVFGLTLSLGTTAALLMLIGYSVDSDVLLTTRLLKRQGKVDEKFRGAFRTGIIMTTTTLAAVVVMFIVFSLGQVTLIRDISAVLIIGLIIDMMNTWMLNAGLLKWYVKKGGK.

6 consecutive transmembrane segments (helical) span residues 16 to 36 (MVALPLCLLILSVIFLAFNTV), 126 to 146 (QAIWALLFAFVLMAIVVFVAF), 148 to 168 (IFIPSVAVVLSAFSDIVITAA), 169 to 189 (FMDVFGLTLSLGTTAALLMLI), 221 to 241 (GIIMTTTTLAAVVVMFIVFSL), and 253 to 273 (VLIIGLIIDMMNTWMLNAGLL).

The protein belongs to the SecD/SecF family. SecF subfamily. In terms of assembly, part of the protein translocation apparatus. Forms a complex with SecD.

It is found in the cell membrane. Involved in protein export. The sequence is that of Protein-export membrane protein SecF from Methanolacinia petrolearia (strain DSM 11571 / OCM 486 / SEBR 4847) (Methanoplanus petrolearius).